Consider the following 78-residue polypeptide: Vacuolar ATPase assembly integral membrane protein VMA21 (78 aa).

Residues 1–14 are Cytoplasmic-facing; sequence MPADIPKSVVQKLV. The chain crosses the membrane as a helical span at residues 15–35; that stretch reads FFTAAMIICPVATFFICQYLF. At 36–38 the chain is on the lumenal side; that stretch reads SNN. Residues 39–59 traverse the membrane as a helical segment; that stretch reads AIISGGVSALVANIVLIGYVV. The Cytoplasmic portion of the chain corresponds to 60–78; sequence AAFMEDTTEQEPEETKKSR. The Prevents secretion from ER motif lies at 75–78; that stretch reads KKSR.

This sequence belongs to the VMA21 family.

Its subcellular location is the endoplasmic reticulum membrane. It is found in the endoplasmic reticulum-Golgi intermediate compartment membrane. The protein localises to the cytoplasmic vesicle. It localises to the COPII-coated vesicle membrane. Its function is as follows. Required for the assembly of the V0 complex of the vacuolar ATPase (V-ATPase) in the endoplasmic reticulum. This Debaryomyces hansenii (strain ATCC 36239 / CBS 767 / BCRC 21394 / JCM 1990 / NBRC 0083 / IGC 2968) (Yeast) protein is Vacuolar ATPase assembly integral membrane protein VMA21.